A 323-amino-acid polypeptide reads, in one-letter code: CIMIP2 protein CG18335 (323 aa).

The protein belongs to the CIMIP2 family.

The protein resides in the cytoplasm. The protein localises to the cytoskeleton. It localises to the cilium axoneme. Functionally, probable microtubule inner protein (MIP) part of the dynein-decorated doublet microtubules (DMTs) in cilium axoneme. The protein is CIMIP2 protein CG18335 of Drosophila melanogaster (Fruit fly).